The chain runs to 284 residues: Tropomyosin (284 aa).

Residues 1–284 are a coiled coil; the sequence is MDGIKKKMIA…DQTFAELTGY (284 aa). The disordered stretch occupies residues 111–131; it reads TKLEEASKTAEESERGRKDLE.

This sequence belongs to the tropomyosin family. In terms of assembly, homodimer.

Functionally, tropomyosin, in association with the troponin complex, plays a central role in the calcium dependent regulation of muscle contraction. The sequence is that of Tropomyosin from Schistosoma haematobium (Blood fluke).